The primary structure comprises 455 residues: uncharacterized protein (455 aa).

The signal sequence occupies residues 1–24 (MKTTKILLHTGVLALSLLATQVMA).

This is an uncharacterized protein from Pseudomonas aeruginosa (strain ATCC 15692 / DSM 22644 / CIP 104116 / JCM 14847 / LMG 12228 / 1C / PRS 101 / PAO1).